A 299-amino-acid polypeptide reads, in one-letter code: MHLKIDPEVRRALQGKRPVVALESTIITHGMPYPENLATARSLESQVRAGGAVPATIAVIGGVICVGLSDKELEWLAGAKNVLKLSRNDLPYAIATQKIGATTVAATMIAANLAGIRIFATGGIGGVHRGAETTFDISADLEEFARTSVAVVCAGAKAILDLPKTLEYLETRGVPVIAYGTDEFPAFWSRQSGLKAPLRLDTPAEIARFLEVKWSLNLTGGAVICNPVPAEDEIPFHEMRTFIDSAVDEAERYGIKGKAVTPYILARIVELTGGRSLRTNMALAQNNARLAAELATHLQ.

Catalysis depends on E23, which acts as the Proton donor. Substrate-binding residues include K84 and V104. D136 is a binding site for Mn(2+). 138-140 (SAD) serves as a coordination point for substrate. The Nucleophile role is filled by K157.

Belongs to the pseudouridine-5'-phosphate glycosidase family. Homotrimer. The cofactor is Mn(2+).

It catalyses the reaction D-ribose 5-phosphate + uracil = psi-UMP + H2O. In terms of biological role, catalyzes the reversible cleavage of pseudouridine 5'-phosphate (PsiMP) to ribose 5-phosphate and uracil. Functions biologically in the cleavage direction, as part of a pseudouridine degradation pathway. This is Pseudouridine-5'-phosphate glycosidase from Solibacter usitatus (strain Ellin6076).